The primary structure comprises 291 residues: Segregation and condensation protein A (291 aa).

It belongs to the ScpA family. Component of a cohesin-like complex composed of ScpA, ScpB and the Smc homodimer, in which ScpA and ScpB bind to the head domain of Smc. The presence of the three proteins is required for the association of the complex with DNA.

It is found in the cytoplasm. Its function is as follows. Participates in chromosomal partition during cell division. May act via the formation of a condensin-like complex containing Smc and ScpB that pull DNA away from mid-cell into both cell halves. This is Segregation and condensation protein A from Malacoplasma penetrans (strain HF-2) (Mycoplasma penetrans).